Consider the following 634-residue polypeptide: Sodium-dependent neutral amino acid transporter B(0)AT1 (634 aa).

The Cytoplasmic portion of the chain corresponds to 1–41 (MVRLVLPNPGLEDRIPSLDELEVIEKEEASSRPKWDNKAQY). S17 carries the post-translational modification Phosphoserine. The helical transmembrane segment at 42–62 (MLTCVGFCVGLGNVWRFPYLC) threads the bilayer. Over 63–65 (QSH) the chain is Extracellular. The chain crosses the membrane as a helical span at residues 66–86 (GGGAFMIPFLILLVLEGIPLL). The Cytoplasmic segment spans residues 87–119 (HLEFAIGQRLRKGSVGVWSSIHPALKGVGIASM). A helical membrane pass occupies residues 120–140 (FVSFMVGLYYNTIIAWVMWYF). At 141-192 (FNSFQEPLPWSECPLNQNQTGYVEECAKSSSVDYFWYRETLNISTSISDSGS) the chain is on the extracellular side. Residues N158 and N182 are each glycosylated (N-linked (GlcNAc...) asparagine). Residues 193–213 (IQWWILLCLTCAWSVLYVCTI) traverse the membrane as a helical segment. Residues 214–221 (RGIETTGK) lie on the Cytoplasmic side of the membrane. A helical transmembrane segment spans residues 222–242 (AVYITSTLPYVVLTIFLIRGL). Residues 243–268 (TLKGATNGIVFLFTPNITELSNPNTW) are Extracellular-facing. N258 is a glycosylation site (N-linked (GlcNAc...) asparagine). A helical transmembrane segment spans residues 269-289 (LDAGAQVFYSFSLAFGGLISF). The Cytoplasmic segment spans residues 290–304 (SSYNSVHNNCEMDSV). The chain crosses the membrane as a helical span at residues 305–325 (IVSIINGFTSVYAATVVYSII). Residues 326 to 413 (GFRATERFDD…TEAITKMPVS (88 aa)) are Extracellular-facing. N354 and N368 each carry an N-linked (GlcNAc...) asparagine glycan. The helical transmembrane segment at 414 to 434 (PLWSVLFFIMLFCLGLSSMFG) threads the bilayer. The Cytoplasmic segment spans residues 435 to 456 (NMEGVVVPLQDLNITPKKWPKE). A helical transmembrane segment spans residues 457–477 (LLTGLICLGTYLIAFIFTLNS). Over 478–490 (GQYWLSLLDSYAG) the chain is Extracellular. Residues 491-511 (SIPLLIIAFCEMFAVVYVYGV) traverse the membrane as a helical segment. Topologically, residues 512 to 531 (DRFNKDIEFMIGHKPNIFWQ) are cytoplasmic. A helical membrane pass occupies residues 532 to 552 (VTWRVVSPLIMLVIFLFFFVI). The Extracellular portion of the chain corresponds to 553 to 581 (EVNKQLMYSVWDPDYEEFPKSQKVPYPDW). A helical membrane pass occupies residues 582–602 (VYAVVVIVAGVPCLTIPCFAI). The Cytoplasmic portion of the chain corresponds to 603–634 (YKLIRNYCQKSGDQHGLVNALSTASVNGDLKN). S627 bears the Phosphoserine mark.

Belongs to the sodium:neurotransmitter symporter (SNF) (TC 2.A.22) family. SLC6A19 subfamily. In terms of assembly, interacts in a tissue-specific manner with ACE2 in small intestine and with CLTRN in the kidney. Interacts with CLTRN; this interaction is required for trafficking of SLC6A19 to the plasma membrane and for its catalytic activation in kidneys. Interacts with ACE2; this interaction is required for trafficking of SLC6A19 to the plasma membrane and for its catalytic activation in intestine. Interacts with ANPEP; the interaction positively regulates its amino acid transporter activity.

It localises to the membrane. It catalyses the reaction L-alanine(in) + Na(+)(in) = L-alanine(out) + Na(+)(out). The catalysed reaction is L-cysteine(in) + Na(+)(in) = L-cysteine(out) + Na(+)(out). The enzyme catalyses L-glutamine(in) + Na(+)(in) = L-glutamine(out) + Na(+)(out). It carries out the reaction glycine(in) + Na(+)(in) = glycine(out) + Na(+)(out). It catalyses the reaction L-isoleucine(in) + Na(+)(in) = L-isoleucine(out) + Na(+)(out). The catalysed reaction is L-leucine(in) + Na(+)(in) = L-leucine(out) + Na(+)(out). The enzyme catalyses L-methionine(in) + Na(+)(in) = L-methionine(out) + Na(+)(out). It carries out the reaction L-phenylalanine(in) + Na(+)(in) = L-phenylalanine(out) + Na(+)(out). It catalyses the reaction L-serine(in) + Na(+)(in) = L-serine(out) + Na(+)(out). The catalysed reaction is L-tryptophan(in) + Na(+)(in) = L-tryptophan(out) + Na(+)(out). The enzyme catalyses L-tyrosine(in) + Na(+)(in) = L-tyrosine(out) + Na(+)(out). It carries out the reaction L-valine(in) + Na(+)(in) = L-valine(out) + Na(+)(out). Its function is as follows. Transporter that mediates resorption of neutral amino acids across the apical membrane of renal and intestinal epithelial cells. This uptake is sodium-dependent and chloride-independent. Requires CLTRN in kidney or ACE2 in intestine for cell surface expression and amino acid transporter activity. This chain is Sodium-dependent neutral amino acid transporter B(0)AT1, found in Rattus norvegicus (Rat).